The sequence spans 30 residues: Kalata-B14 (30 aa).

Positions glycine 1–aspartate 30 form a cross-link, cyclopeptide (Gly-Asp). Disulfide bonds link cysteine 5–cysteine 19, cysteine 9–cysteine 21, and cysteine 14–cysteine 27.

In terms of processing, this is a cyclic peptide.

Functionally, probably participates in a plant defense mechanism. The protein is Kalata-B14 of Oldenlandia affinis.